The chain runs to 64 residues: Large ribosomal subunit protein bL35 (64 aa).

It belongs to the bacterial ribosomal protein bL35 family.

The chain is Large ribosomal subunit protein bL35 from Chlorobium limicola (strain DSM 245 / NBRC 103803 / 6330).